The sequence spans 564 residues: Excitatory amino acid transporter 4 (564 aa).

At 1-55 (MSSHGNSLFLRESGQRLGRVGWLQRLQESLQQRALRTRLRLQTMTREHVLRFLRR) the chain is on the cytoplasmic side. Ser2 carries the phosphoserine modification. 3 consecutive transmembrane segments (helical) span residues 56–76 (NAFILLTVSAVVIGVSLAFAL), 99–119 (MLQMLVLPLIVSSLVTGMASL), and 133–153 (VYYMVTTVIAVFIGILMVTII). Asn216, Asn232, and Asn239 each carry an N-linked (GlcNAc...) asparagine glycan. Transmembrane regions (helical) follow at residues 262-285 (SANGINALGLVVFSVAFGLVIGGV), 295-322 (FFDSLNEAIMRMVGIIIWYAPVGILFLI), and 344-365 (LTVIVGLFLHAGGVLPLIYFLI). Positions 371 to 401 (FPFIGGVLQALITAMGTSSSSATLPITFRCL) form an intramembrane region, discontinuously helical. 388–390 (SSS) is a binding site for L-aspartate. Residues 411–437 (ITRFVLPVGATVNMDGTALYEALAAIF) traverse the membrane as a helical segment. Gly419, Thr421, and Asn423 together coordinate Na(+). L-aspartate-binding positions include Thr427, 468-472 (IPQAG), Asp501, and Asn508. Residues 451–484 (ITTISITATAASVGAAGIPQAGLVTMVIVLTSVG) constitute an intramembrane region (discontinuously helical). The chain crosses the membrane as a helical span at residues 498–519 (WFLDRLRTMTNVLGDSIGAAVI). Residues Asn508 and Asp512 each coordinate Na(+).

Belongs to the dicarboxylate/amino acid:cation symporter (DAACS) (TC 2.A.23) family. SLC1A6 subfamily. In terms of assembly, homotrimer. As to expression, detected in brain, cerebellum and hippocampus.

The protein localises to the cell membrane. It carries out the reaction K(+)(in) + L-glutamate(out) + 3 Na(+)(out) + H(+)(out) = K(+)(out) + L-glutamate(in) + 3 Na(+)(in) + H(+)(in). The enzyme catalyses K(+)(in) + L-aspartate(out) + 3 Na(+)(out) + H(+)(out) = K(+)(out) + L-aspartate(in) + 3 Na(+)(in) + H(+)(in). It catalyses the reaction D-aspartate(out) + K(+)(in) + 3 Na(+)(out) + H(+)(out) = D-aspartate(in) + K(+)(out) + 3 Na(+)(in) + H(+)(in). Its function is as follows. Sodium-dependent, high-affinity amino acid transporter that mediates the uptake of L-glutamate and also L-aspartate and D-aspartate. Functions as a symporter that transports one amino acid molecule together with two or three Na(+) ions and one proton, in parallel with the counter-transport of one K(+) ion. Mediates Cl(-) flux that is not coupled to amino acid transport; this avoids the accumulation of negative charges due to aspartate and Na(+) symport. Plays a redundant role in the rapid removal of released glutamate from the synaptic cleft, which is essential for terminating the postsynaptic action of glutamate. In Canis lupus familiaris (Dog), this protein is Excitatory amino acid transporter 4 (SLC1A6).